We begin with the raw amino-acid sequence, 266 residues long: Hydroxyacylglutathione hydrolase (266 aa).

7 residues coordinate Zn(2+): His53, His55, Asp57, His58, His118, Asp140, and His178.

Belongs to the metallo-beta-lactamase superfamily. Glyoxalase II family. Monomer. Zn(2+) serves as cofactor.

The catalysed reaction is an S-(2-hydroxyacyl)glutathione + H2O = a 2-hydroxy carboxylate + glutathione + H(+). It participates in secondary metabolite metabolism; methylglyoxal degradation; (R)-lactate from methylglyoxal: step 2/2. In terms of biological role, thiolesterase that catalyzes the hydrolysis of S-D-lactoyl-glutathione to form glutathione and D-lactic acid. This Cupriavidus taiwanensis (strain DSM 17343 / BCRC 17206 / CCUG 44338 / CIP 107171 / LMG 19424 / R1) (Ralstonia taiwanensis (strain LMG 19424)) protein is Hydroxyacylglutathione hydrolase.